Consider the following 375-residue polypeptide: Queuine tRNA-ribosyltransferase (375 aa).

The active-site Proton acceptor is Asp90. Residues 90–94 (DSGGF), Asp144, Gln193, and Gly220 contribute to the substrate site. An RNA binding region spans residues 251-257 (GVGTPED). Residue Asp270 is the Nucleophile of the active site. The interval 275–279 (TRNAR) is RNA binding; important for wobble base 34 recognition. Cys308, Cys310, Cys313, and His339 together coordinate Zn(2+).

This sequence belongs to the queuine tRNA-ribosyltransferase family. As to quaternary structure, homodimer. Within each dimer, one monomer is responsible for RNA recognition and catalysis, while the other monomer binds to the replacement base PreQ1. Zn(2+) is required as a cofactor.

It carries out the reaction 7-aminomethyl-7-carbaguanine + guanosine(34) in tRNA = 7-aminomethyl-7-carbaguanosine(34) in tRNA + guanine. Its pathway is tRNA modification; tRNA-queuosine biosynthesis. In terms of biological role, catalyzes the base-exchange of a guanine (G) residue with the queuine precursor 7-aminomethyl-7-deazaguanine (PreQ1) at position 34 (anticodon wobble position) in tRNAs with GU(N) anticodons (tRNA-Asp, -Asn, -His and -Tyr). Catalysis occurs through a double-displacement mechanism. The nucleophile active site attacks the C1' of nucleotide 34 to detach the guanine base from the RNA, forming a covalent enzyme-RNA intermediate. The proton acceptor active site deprotonates the incoming PreQ1, allowing a nucleophilic attack on the C1' of the ribose to form the product. After dissociation, two additional enzymatic reactions on the tRNA convert PreQ1 to queuine (Q), resulting in the hypermodified nucleoside queuosine (7-(((4,5-cis-dihydroxy-2-cyclopenten-1-yl)amino)methyl)-7-deazaguanosine). In Herminiimonas arsenicoxydans, this protein is Queuine tRNA-ribosyltransferase.